The sequence spans 282 residues: uncharacterized protein (282 aa).

It belongs to the glycosyltransferase 2 family. WaaE/KdtX subfamily.

This is an uncharacterized protein from Rickettsia conorii (strain ATCC VR-613 / Malish 7).